A 392-amino-acid polypeptide reads, in one-letter code: Phosphoglycerate kinase (392 aa).

Substrate-binding positions include 21 to 23 (DLN), arginine 36, 59 to 62 (HLGR), arginine 113, and arginine 146. Residues lysine 197, glutamate 319, and 345 to 348 (GGDT) contribute to the ATP site.

It belongs to the phosphoglycerate kinase family. Monomer.

It localises to the cytoplasm. It carries out the reaction (2R)-3-phosphoglycerate + ATP = (2R)-3-phospho-glyceroyl phosphate + ADP. It functions in the pathway carbohydrate degradation; glycolysis; pyruvate from D-glyceraldehyde 3-phosphate: step 2/5. The protein is Phosphoglycerate kinase of Thioalkalivibrio sulfidiphilus (strain HL-EbGR7).